A 547-amino-acid polypeptide reads, in one-letter code: Glucose-6-phosphate isomerase (547 aa).

Catalysis depends on glutamate 351, which acts as the Proton donor. Catalysis depends on residues histidine 382 and lysine 509.

The protein belongs to the GPI family.

The protein resides in the cytoplasm. It catalyses the reaction alpha-D-glucose 6-phosphate = beta-D-fructose 6-phosphate. Its pathway is carbohydrate biosynthesis; gluconeogenesis. The protein operates within carbohydrate degradation; glycolysis; D-glyceraldehyde 3-phosphate and glycerone phosphate from D-glucose: step 2/4. Functionally, catalyzes the reversible isomerization of glucose-6-phosphate to fructose-6-phosphate. This chain is Glucose-6-phosphate isomerase, found in Coxiella burnetii (strain Dugway 5J108-111).